Consider the following 148-residue polypeptide: SsrA-binding protein (148 aa).

The protein belongs to the SmpB family.

The protein resides in the cytoplasm. Required for rescue of stalled ribosomes mediated by trans-translation. Binds to transfer-messenger RNA (tmRNA), required for stable association of tmRNA with ribosomes. tmRNA and SmpB together mimic tRNA shape, replacing the anticodon stem-loop with SmpB. tmRNA is encoded by the ssrA gene; the 2 termini fold to resemble tRNA(Ala) and it encodes a 'tag peptide', a short internal open reading frame. During trans-translation Ala-aminoacylated tmRNA acts like a tRNA, entering the A-site of stalled ribosomes, displacing the stalled mRNA. The ribosome then switches to translate the ORF on the tmRNA; the nascent peptide is terminated with the 'tag peptide' encoded by the tmRNA and targeted for degradation. The ribosome is freed to recommence translation, which seems to be the essential function of trans-translation. This is SsrA-binding protein from Mycoplasma mycoides subsp. mycoides SC (strain CCUG 32753 / NCTC 10114 / PG1).